The sequence spans 393 residues: MSLPLTRKDLMIVNMGPQHPSMHGVLRLIVTLDGEDVIDCEPILGYLHRGMEKIAENRTIIQYLPYVTRWDYLATMFTEAITVNAPEFLENIQIPQRASYIRVIMLELSRIASHLLWLGPFMADLGAQTPFFYIFRERELIYDLFEAATGMRMMHNYFRIGGVAADLPYGWIDKCLDFCDYFLRGIIEYQQLIKQNPIFLERVEGVGFISGEEAVNWGLSGPMLRASGIQWDLRKVDLYESYNQFDWKVQWQKEGDSLARYLVRISEMRESIKIIQQAIEKIPGGPYENLEVRRFKKAKTSEWNDFEYKFLGKKPSPNFELSKQELYVRVEAPKGELGIYLVGDDSLFPWRWKIRPPGFINLQILPQLVKKMKLADIMTILGSIDIIMGEVDR.

This sequence belongs to the complex I 49 kDa subunit family. As to quaternary structure, NDH is composed of at least 16 different subunits, 5 of which are encoded in the nucleus.

It is found in the plastid. Its subcellular location is the chloroplast thylakoid membrane. It catalyses the reaction a plastoquinone + NADH + (n+1) H(+)(in) = a plastoquinol + NAD(+) + n H(+)(out). It carries out the reaction a plastoquinone + NADPH + (n+1) H(+)(in) = a plastoquinol + NADP(+) + n H(+)(out). NDH shuttles electrons from NAD(P)H:plastoquinone, via FMN and iron-sulfur (Fe-S) centers, to quinones in the photosynthetic chain and possibly in a chloroplast respiratory chain. The immediate electron acceptor for the enzyme in this species is believed to be plastoquinone. Couples the redox reaction to proton translocation, and thus conserves the redox energy in a proton gradient. The sequence is that of NAD(P)H-quinone oxidoreductase subunit H, chloroplastic from Lolium perenne (Perennial ryegrass).